The sequence spans 506 residues: Histidine ammonia-lyase (506 aa).

The segment at residues 142-144 (ASG) is a cross-link (5-imidazolinone (Ala-Gly)). The residue at position 143 (serine 143) is a 2,3-didehydroalanine (Ser).

This sequence belongs to the PAL/histidase family. In terms of processing, contains an active site 4-methylidene-imidazol-5-one (MIO), which is formed autocatalytically by cyclization and dehydration of residues Ala-Ser-Gly.

Its subcellular location is the cytoplasm. The catalysed reaction is L-histidine = trans-urocanate + NH4(+). It participates in amino-acid degradation; L-histidine degradation into L-glutamate; N-formimidoyl-L-glutamate from L-histidine: step 1/3. The sequence is that of Histidine ammonia-lyase from Bacillus cereus (strain ATCC 14579 / DSM 31 / CCUG 7414 / JCM 2152 / NBRC 15305 / NCIMB 9373 / NCTC 2599 / NRRL B-3711).